The chain runs to 357 residues: Eukaryotic translation initiation factor 3 subunit F (357 aa).

Residues Met-1–Leu-82 are disordered. The residue at position 2 (Ala-2) is an N-acetylalanine. A compositionally biased stretch (pro residues) spans Ser-9–Ala-36. Over residues Pro-37–Ala-74 the composition is skewed to low complexity. Ser-46 carries the post-translational modification Phosphoserine; by CDK11; in vitro. The MPN domain maps to Val-92 to Gly-222. Residue Lys-238 is modified to N6-acetyllysine. Ser-258 is modified (phosphoserine).

Belongs to the eIF-3 subunit F family. In terms of assembly, component of the eukaryotic translation initiation factor 3 (eIF-3) complex, which is composed of 13 subunits: EIF3A, EIF3B, EIF3C, EIF3D, EIF3E, EIF3F, EIF3G, EIF3H, EIF3I, EIF3J, EIF3K, EIF3L and EIF3M. The eIF-3 complex appears to include 3 stable modules: module A is composed of EIF3A, EIF3B, EIF3G and EIF3I; module B is composed of EIF3F, EIF3H, and EIF3M; and module C is composed of EIF3C, EIF3D, EIF3E, EIF3K and EIF3L. EIF3C of module C binds EIF3B of module A and EIF3H of module B, thereby linking the three modules. EIF3J is a labile subunit that binds to the eIF-3 complex via EIF3B. The eIF-3 complex interacts with RPS6KB1 under conditions of nutrient depletion. Mitogenic stimulation leads to binding and activation of a complex composed of MTOR and RPTOR, leading to phosphorylation and release of RPS6KB1 and binding of EIF4B to eIF-3. Interacts with RNF139; the interaction leads to protein translation inhibitions in a ubiquitination-dependent manner. Interacts with DTX1, the interaction is required for deubiquitinating activity towards NOTCH1. Phosphorylation is enhanced upon serum stimulation. Phosphorylated during apoptosis by caspase-processed CDK11.

Its subcellular location is the cytoplasm. The catalysed reaction is Thiol-dependent hydrolysis of ester, thioester, amide, peptide and isopeptide bonds formed by the C-terminal Gly of ubiquitin (a 76-residue protein attached to proteins as an intracellular targeting signal).. Component of the eukaryotic translation initiation factor 3 (eIF-3) complex, which is required for several steps in the initiation of protein synthesis. The eIF-3 complex associates with the 40S ribosome and facilitates the recruitment of eIF-1, eIF-1A, eIF-2:GTP:methionyl-tRNAi and eIF-5 to form the 43S pre-initiation complex (43S PIC). The eIF-3 complex stimulates mRNA recruitment to the 43S PIC and scanning of the mRNA for AUG recognition. The eIF-3 complex is also required for disassembly and recycling of post-termination ribosomal complexes and subsequently prevents premature joining of the 40S and 60S ribosomal subunits prior to initiation. The eIF-3 complex specifically targets and initiates translation of a subset of mRNAs involved in cell proliferation, including cell cycling, differentiation and apoptosis, and uses different modes of RNA stem-loop binding to exert either translational activation or repression. Its function is as follows. Deubiquitinates activated NOTCH1, promoting its nuclear import, thereby acting as a positive regulator of Notch signaling. The polypeptide is Eukaryotic translation initiation factor 3 subunit F (Homo sapiens (Human)).